Here is a 543-residue protein sequence, read N- to C-terminus: Chaperonin GroEL (543 aa).

ATP-binding positions include 29-32 (TVGP), 86-90 (DGTTT), glycine 413, and aspartate 504.

It belongs to the chaperonin (HSP60) family. Forms a cylinder of 14 subunits composed of two heptameric rings stacked back-to-back. Interacts with the co-chaperonin GroES.

It localises to the cytoplasm. It carries out the reaction ATP + H2O + a folded polypeptide = ADP + phosphate + an unfolded polypeptide.. In terms of biological role, together with its co-chaperonin GroES, plays an essential role in assisting protein folding. The GroEL-GroES system forms a nano-cage that allows encapsulation of the non-native substrate proteins and provides a physical environment optimized to promote and accelerate protein folding. The polypeptide is Chaperonin GroEL (Mycoplasma genitalium (strain ATCC 33530 / DSM 19775 / NCTC 10195 / G37) (Mycoplasmoides genitalium)).